Consider the following 492-residue polypeptide: Ketol-acid reductoisomerase (NADP(+)) (492 aa).

The KARI N-terminal Rossmann domain maps to 15-208; that stretch reads AQLGKCRFMA…GGHRAGVLES (194 aa). NADP(+)-binding positions include 45–48, Arg68, Arg76, Ser78, and 108–110; these read CGAQ and DKQ. Residue His132 is part of the active site. Gly158 is a binding site for NADP(+). KARI C-terminal knotted domains lie at 209–344 and 345–485; these read SFVA…NAPQ and FEGK…MTDM. Mg(2+) is bound by residues Asp217, Glu221, Glu389, and Glu393. A substrate-binding site is contributed by Ser414.

The protein belongs to the ketol-acid reductoisomerase family. Requires Mg(2+) as cofactor.

It carries out the reaction (2R)-2,3-dihydroxy-3-methylbutanoate + NADP(+) = (2S)-2-acetolactate + NADPH + H(+). It catalyses the reaction (2R,3R)-2,3-dihydroxy-3-methylpentanoate + NADP(+) = (S)-2-ethyl-2-hydroxy-3-oxobutanoate + NADPH + H(+). The protein operates within amino-acid biosynthesis; L-isoleucine biosynthesis; L-isoleucine from 2-oxobutanoate: step 2/4. It participates in amino-acid biosynthesis; L-valine biosynthesis; L-valine from pyruvate: step 2/4. Involved in the biosynthesis of branched-chain amino acids (BCAA). Catalyzes an alkyl-migration followed by a ketol-acid reduction of (S)-2-acetolactate (S2AL) to yield (R)-2,3-dihydroxy-isovalerate. In the isomerase reaction, S2AL is rearranged via a Mg-dependent methyl migration to produce 3-hydroxy-3-methyl-2-ketobutyrate (HMKB). In the reductase reaction, this 2-ketoacid undergoes a metal-dependent reduction by NADPH to yield (R)-2,3-dihydroxy-isovalerate. The protein is Ketol-acid reductoisomerase (NADP(+)) of Yersinia pseudotuberculosis serotype O:3 (strain YPIII).